Consider the following 119-residue polypeptide: uncharacterized protein (119 aa).

Positions 1–30 (MCPECFFLMLCFCGYCSSSSSSFRSSPVYG) are cleaved as a signal peptide.

This is an uncharacterized protein from Escherichia coli (strain UTI89 / UPEC).